Consider the following 880-residue polypeptide: Leucine--tRNA ligase (880 aa).

The 'HIGH' region motif lies at 49–59; that stretch reads PYPSGRIHMGH. The 'KMSKS' region motif lies at 638 to 642; sequence KMSKS. Lys-641 is an ATP binding site.

This sequence belongs to the class-I aminoacyl-tRNA synthetase family.

It localises to the cytoplasm. The catalysed reaction is tRNA(Leu) + L-leucine + ATP = L-leucyl-tRNA(Leu) + AMP + diphosphate. The polypeptide is Leucine--tRNA ligase (Bartonella henselae (strain ATCC 49882 / DSM 28221 / CCUG 30454 / Houston 1) (Rochalimaea henselae)).